Consider the following 353-residue polypeptide: Photosystem II protein D1 (353 aa).

T2 is modified (N-acetylthreonine). Position 2 is a phosphothreonine (T2). 3 helical membrane-spanning segments follow: residues 29 to 46, 118 to 133, and 142 to 156; these read YIGW…TATS, HFLL…EWEL, and WIAV…AATA. Residue H118 coordinates chlorophyll a. Y126 provides a ligand contact to pheophytin a. [CaMn4O5] cluster contacts are provided by D170 and E189. A helical membrane pass occupies residues 197–218; that stretch reads FHMLGVAGVFGGSLFSAMHGSL. Residue H198 participates in chlorophyll a binding. A quinone-binding positions include H215 and 264 to 265; that span reads SF. H215 contributes to the Fe cation binding site. Fe cation is bound at residue H272. Residues 274–288 form a helical membrane-spanning segment; that stretch reads FLAAWPVVGIWFTAL. The [CaMn4O5] cluster site is built by H332, E333, D342, and A344. Positions 345–353 are excised as a propeptide; it reads AVEAPSTIG.

Belongs to the reaction center PufL/M/PsbA/D family. PSII is composed of 1 copy each of membrane proteins PsbA, PsbB, PsbC, PsbD, PsbE, PsbF, PsbH, PsbI, PsbJ, PsbK, PsbL, PsbM, PsbT, PsbX, PsbY, PsbZ, Psb30/Ycf12, at least 3 peripheral proteins of the oxygen-evolving complex and a large number of cofactors. It forms dimeric complexes. It depends on The D1/D2 heterodimer binds P680, chlorophylls that are the primary electron donor of PSII, and subsequent electron acceptors. It shares a non-heme iron and each subunit binds pheophytin, quinone, additional chlorophylls, carotenoids and lipids. D1 provides most of the ligands for the Mn4-Ca-O5 cluster of the oxygen-evolving complex (OEC). There is also a Cl(-1) ion associated with D1 and D2, which is required for oxygen evolution. The PSII complex binds additional chlorophylls, carotenoids and specific lipids. as a cofactor. Post-translationally, tyr-161 forms a radical intermediate that is referred to as redox-active TyrZ, YZ or Y-Z. C-terminally processed by CTPA; processing is essential to allow assembly of the oxygen-evolving complex and thus photosynthetic growth.

The protein resides in the plastid. It is found in the chloroplast thylakoid membrane. It carries out the reaction 2 a plastoquinone + 4 hnu + 2 H2O = 2 a plastoquinol + O2. Functionally, photosystem II (PSII) is a light-driven water:plastoquinone oxidoreductase that uses light energy to abstract electrons from H(2)O, generating O(2) and a proton gradient subsequently used for ATP formation. It consists of a core antenna complex that captures photons, and an electron transfer chain that converts photonic excitation into a charge separation. The D1/D2 (PsbA/PsbD) reaction center heterodimer binds P680, the primary electron donor of PSII as well as several subsequent electron acceptors. This is Photosystem II protein D1 from Lemna minor (Common duckweed).